A 192-amino-acid chain; its full sequence is Xanthine phosphoribosyltransferase (192 aa).

Residues Leu-20 and Asn-27 each coordinate xanthine. Ala-128–Ala-132 contributes to the 5-phospho-alpha-D-ribose 1-diphosphate binding site. Lys-156 contributes to the xanthine binding site.

It belongs to the purine/pyrimidine phosphoribosyltransferase family. Xpt subfamily. As to quaternary structure, homodimer.

Its subcellular location is the cytoplasm. It catalyses the reaction XMP + diphosphate = xanthine + 5-phospho-alpha-D-ribose 1-diphosphate. It participates in purine metabolism; XMP biosynthesis via salvage pathway; XMP from xanthine: step 1/1. Its function is as follows. Converts the preformed base xanthine, a product of nucleic acid breakdown, to xanthosine 5'-monophosphate (XMP), so it can be reused for RNA or DNA synthesis. The sequence is that of Xanthine phosphoribosyltransferase from Lacticaseibacillus casei (strain BL23) (Lactobacillus casei).